A 580-amino-acid polypeptide reads, in one-letter code: Protein O-linked-mannose beta-1,4-N-acetylglucosaminyltransferase 2 (580 aa).

Over 1 to 4 (MHLS) the chain is Cytoplasmic. A helical; Signal-anchor for type II membrane protein transmembrane segment spans residues 5-25 (AVFNALLVSVLAAVLWKHVRL). At 26-580 (REHAATLEEE…PFADVLVCNT (555 aa)) the chain is on the lumenal side. N-linked (GlcNAc...) asparagine glycosylation is found at Asn99 and Asn276. Residues 488–580 (ARCQASVHGA…PFADVLVCNT (93 aa)) form the Fibronectin type-III domain.

It belongs to the glycosyltransferase 61 family. Highly expressed in the brain, muscle, heart, and kidney in both fetus and adult. In the brain, highest expression in the cortex and cerebellum. Highly expressed in the pancreas.

Its subcellular location is the endoplasmic reticulum membrane. The enzyme catalyses 3-O-(alpha-D-mannosyl)-L-threonyl-[protein] + UDP-N-acetyl-alpha-D-glucosamine = 3-O-(N-acetyl-beta-D-glucosaminyl-(1-&gt;4)-alpha-D-mannosyl)-L-threonyl-[protein] + UDP + H(+). The protein operates within protein modification; protein glycosylation. In terms of biological role, O-linked mannose beta-1,4-N-acetylglucosaminyltransferase that transfers UDP-N-acetyl-D-glucosamine to the 4-position of the mannose to generate N-acetyl-D-glucosamine-beta-1,4-O-D-mannosylprotein. Involved in the biosynthesis of the phosphorylated O-mannosyl trisaccharide (N-acetylgalactosamine-beta-3-N-acetylglucosamine-beta-4-(phosphate-6-)mannose), a carbohydrate structure present in alpha-dystroglycan (DAG1), which is required for binding laminin G-like domain-containing extracellular proteins with high affinity. The polypeptide is Protein O-linked-mannose beta-1,4-N-acetylglucosaminyltransferase 2 (POMGNT2) (Homo sapiens (Human)).